We begin with the raw amino-acid sequence, 276 residues long: Undecaprenyl-diphosphatase (276 aa).

Transmembrane regions (helical) follow at residues 40 to 60, 98 to 118, 121 to 141, 155 to 175, 200 to 220, 227 to 247, and 255 to 275; these read GLAF…TFFW, WLII…KDAI, IFRG…VLYY, MSFK…FPGI, FLLS…DIAT, VLLA…KLLM, and LDIF…LSVV.

The protein belongs to the UppP family.

It localises to the cell membrane. It carries out the reaction di-trans,octa-cis-undecaprenyl diphosphate + H2O = di-trans,octa-cis-undecaprenyl phosphate + phosphate + H(+). Functionally, catalyzes the dephosphorylation of undecaprenyl diphosphate (UPP). The protein is Undecaprenyl-diphosphatase of Methanosphaera stadtmanae (strain ATCC 43021 / DSM 3091 / JCM 11832 / MCB-3).